Consider the following 288-residue polypeptide: Acetyl-coenzyme A carboxylase carboxyl transferase subunit beta (288 aa).

A CoA carboxyltransferase N-terminal domain is found at 33-288 (LFSQCPGCKH…LVRLHGGSPR (256 aa)). 4 residues coordinate Zn(2+): cysteine 37, cysteine 40, cysteine 55, and cysteine 58. The C4-type zinc finger occupies 37 to 58 (CPGCKHTIYQKDLGSERICPHC).

This sequence belongs to the AccD/PCCB family. As to quaternary structure, acetyl-CoA carboxylase is a heterohexamer composed of biotin carboxyl carrier protein (AccB), biotin carboxylase (AccC) and two subunits each of ACCase subunit alpha (AccA) and ACCase subunit beta (AccD). Zn(2+) is required as a cofactor.

It localises to the cytoplasm. The enzyme catalyses N(6)-carboxybiotinyl-L-lysyl-[protein] + acetyl-CoA = N(6)-biotinyl-L-lysyl-[protein] + malonyl-CoA. It participates in lipid metabolism; malonyl-CoA biosynthesis; malonyl-CoA from acetyl-CoA: step 1/1. Functionally, component of the acetyl coenzyme A carboxylase (ACC) complex. Biotin carboxylase (BC) catalyzes the carboxylation of biotin on its carrier protein (BCCP) and then the CO(2) group is transferred by the transcarboxylase to acetyl-CoA to form malonyl-CoA. The protein is Acetyl-coenzyme A carboxylase carboxyl transferase subunit beta of Streptococcus pneumoniae serotype 4 (strain ATCC BAA-334 / TIGR4).